We begin with the raw amino-acid sequence, 275 residues long: Phosphatidylglycerol--prolipoprotein diacylglyceryl transferase (275 aa).

Transmembrane regions (helical) follow at residues 20-40, 58-78, 88-108, and 118-138; these read FTIH…LLLA, LLWA…VFQW, IIAI…GFIV, and LSSW…QGIG. Arg139 contributes to the a 1,2-diacyl-sn-glycero-3-phospho-(1'-sn-glycerol) binding site. Helical transmembrane passes span 209-229 and 239-259; these read GEIF…IEGM and IRIS…ILII.

The protein belongs to the Lgt family.

The protein localises to the cell membrane. It carries out the reaction L-cysteinyl-[prolipoprotein] + a 1,2-diacyl-sn-glycero-3-phospho-(1'-sn-glycerol) = an S-1,2-diacyl-sn-glyceryl-L-cysteinyl-[prolipoprotein] + sn-glycerol 1-phosphate + H(+). It functions in the pathway protein modification; lipoprotein biosynthesis (diacylglyceryl transfer). Its function is as follows. Catalyzes the transfer of the diacylglyceryl group from phosphatidylglycerol to the sulfhydryl group of the N-terminal cysteine of a prolipoprotein, the first step in the formation of mature lipoproteins. The polypeptide is Phosphatidylglycerol--prolipoprotein diacylglyceryl transferase (Limosilactobacillus reuteri (strain DSM 20016) (Lactobacillus reuteri)).